The chain runs to 235 residues: Small ribosomal subunit protein uS3 (235 aa).

In terms of domain architecture, KH type-2 spans 39–107 (VRKFLNKELA…PAQINIAEVK (69 aa)). The segment at 215-235 (AQPEQQPADKPKKAPRGKGRK) is disordered.

This sequence belongs to the universal ribosomal protein uS3 family. As to quaternary structure, part of the 30S ribosomal subunit. Forms a tight complex with proteins S10 and S14.

In terms of biological role, binds the lower part of the 30S subunit head. Binds mRNA in the 70S ribosome, positioning it for translation. The sequence is that of Small ribosomal subunit protein uS3 from Pasteurella multocida (strain Pm70).